Here is a 606-residue protein sequence, read N- to C-terminus: Granule-bound starch synthase 1, chloroplastic/amyloplastic (606 aa).

A chloroplast-targeting transit peptide spans Met1–Val76. The tract at residues Arg29–Gly67 is disordered. Polar residues predominate over residues Ser46–Arg66. Lys97 contacts ADP-alpha-D-glucose.

It belongs to the glycosyltransferase 1 family. Bacterial/plant glycogen synthase subfamily.

The protein localises to the plastid. The protein resides in the chloroplast. Its subcellular location is the amyloplast. It carries out the reaction an NDP-alpha-D-glucose + [(1-&gt;4)-alpha-D-glucosyl](n) = [(1-&gt;4)-alpha-D-glucosyl](n+1) + a ribonucleoside 5'-diphosphate + H(+). Its pathway is glycan biosynthesis; starch biosynthesis. Functionally, required for the synthesis of amylose in endosperm. This Oryza sativa (Rice) protein is Granule-bound starch synthase 1, chloroplastic/amyloplastic (WAXY).